The chain runs to 242 residues: Probable transcriptional regulatory protein NMB1648 (242 aa).

Belongs to the TACO1 family.

The protein localises to the cytoplasm. This chain is Probable transcriptional regulatory protein NMB1648, found in Neisseria meningitidis serogroup B (strain ATCC BAA-335 / MC58).